A 422-amino-acid chain; its full sequence is Histidine--tRNA ligase (422 aa).

This sequence belongs to the class-II aminoacyl-tRNA synthetase family. As to quaternary structure, homodimer.

Its subcellular location is the cytoplasm. The catalysed reaction is tRNA(His) + L-histidine + ATP = L-histidyl-tRNA(His) + AMP + diphosphate + H(+). The sequence is that of Histidine--tRNA ligase from Ruthia magnifica subsp. Calyptogena magnifica.